The primary structure comprises 498 residues: Lysine--tRNA ligase (498 aa).

Residues glutamate 407 and glutamate 414 each contribute to the Mg(2+) site.

Belongs to the class-II aminoacyl-tRNA synthetase family. As to quaternary structure, homodimer. Mg(2+) is required as a cofactor.

It localises to the cytoplasm. It carries out the reaction tRNA(Lys) + L-lysine + ATP = L-lysyl-tRNA(Lys) + AMP + diphosphate. The chain is Lysine--tRNA ligase from Rhizobium etli (strain CIAT 652).